A 192-amino-acid polypeptide reads, in one-letter code: Early nodulin-like protein 7 (192 aa).

The first 27 residues, 1–27, serve as a signal peptide directing secretion; the sequence is MMMMMMRSTCNLTLMLCICALVVASMA. The 103-residue stretch at 32–134 folds into the Phytocyanin domain; it reads RDFKVGDEFG…GQRLIVEVMH (103 aa). N48, N89, and N101 each carry an N-linked (GlcNAc...) asparagine glycan. Cysteines 88 and 122 form a disulfide. S166 carries GPI-anchor amidated serine lipidation. The propeptide at 167–192 is removed in mature form; it reads AASSLPTACLLIPLFLTIASFRFISY.

This sequence belongs to the early nodulin-like (ENODL) family. In terms of tissue distribution, mostly expressed in flowers, and, to a lower extent, in seeds, but barely in seedlings, stems, leaves and roots.

Its subcellular location is the cell membrane. Functionally, may act as a carbohydrate transporter. The chain is Early nodulin-like protein 7 from Arabidopsis thaliana (Mouse-ear cress).